The sequence spans 514 residues: 2-isopropylmalate synthase (514 aa).

Positions 5–267 (LVIFDTTLRD…DTRIHTPEIL (263 aa)) constitute a Pyruvate carboxyltransferase domain. 4 residues coordinate Mn(2+): D14, H202, H204, and N238. The regulatory domain stretch occupies residues 394 to 514 (RLVALKVGTQ…GSKEHPQAHV (121 aa)).

It belongs to the alpha-IPM synthase/homocitrate synthase family. LeuA type 1 subfamily. Homodimer. Mn(2+) serves as cofactor.

The protein resides in the cytoplasm. It catalyses the reaction 3-methyl-2-oxobutanoate + acetyl-CoA + H2O = (2S)-2-isopropylmalate + CoA + H(+). It participates in amino-acid biosynthesis; L-leucine biosynthesis; L-leucine from 3-methyl-2-oxobutanoate: step 1/4. Catalyzes the condensation of the acetyl group of acetyl-CoA with 3-methyl-2-oxobutanoate (2-ketoisovalerate) to form 3-carboxy-3-hydroxy-4-methylpentanoate (2-isopropylmalate). The sequence is that of 2-isopropylmalate synthase from Hydrogenovibrio crunogenus (strain DSM 25203 / XCL-2) (Thiomicrospira crunogena).